The chain runs to 514 residues: MNEEQRKAGTINILDERDRKVEKDYSKYFENIYQPPSLKEARKRGKQDINYNRDFHIEDKFEGMGKGRTFLIKTYGCQMNAHDTEVMAGILQALGYTATEDINEADVILINTCAIRENAENKVFSEIGNLKHLKKNRPEALIGVCGCMSQEESVVNKILKSYQNVDMIFGTHNIHKLPEILEEAYLSKAMVVEVWSKEGDIIENLPKVREGSTKAWVNIMYGCDKFCTYCIVPFTRGKERSRRPEDIIEEVRGLARDGYKEITLLGQNVNSYGKDIKDLEYGLGDLLEDISKIDIPRVRFTTSHPWDFTDRMIEVIAKGGNIVPHIHLPVQSGNNAVLKIMGRKYTRESYLDLVNRIKKSIPNVALTTDIIVGYPNETEEQFEETLSLYDEVQFEHAYTYLYSQRDGTPAAKMKDNVPEDVKKARLQRLNKKVGHYSEKAMNQYEGKTVTVLCEGSSKKDDTVLAGYTEKNKLVNFKGPREAIGKLVNVEIDETKQYSLNGTFKEFNDAPLVTN.

The 119-residue stretch at 68 to 186 (RTFLIKTYGC…LPEILEEAYL (119 aa)) folds into the MTTase N-terminal domain. Cys-77, Cys-113, Cys-147, Cys-223, Cys-227, and Cys-230 together coordinate [4Fe-4S] cluster. The Radical SAM core domain occupies 209–439 (REGSTKAWVN…NKKVGHYSEK (231 aa)). One can recognise a TRAM domain in the interval 442 to 505 (NQYEGKTVTV…QYSLNGTFKE (64 aa)).

Belongs to the methylthiotransferase family. MiaB subfamily. Monomer. It depends on [4Fe-4S] cluster as a cofactor.

It localises to the cytoplasm. It catalyses the reaction N(6)-dimethylallyladenosine(37) in tRNA + (sulfur carrier)-SH + AH2 + 2 S-adenosyl-L-methionine = 2-methylsulfanyl-N(6)-dimethylallyladenosine(37) in tRNA + (sulfur carrier)-H + 5'-deoxyadenosine + L-methionine + A + S-adenosyl-L-homocysteine + 2 H(+). In terms of biological role, catalyzes the methylthiolation of N6-(dimethylallyl)adenosine (i(6)A), leading to the formation of 2-methylthio-N6-(dimethylallyl)adenosine (ms(2)i(6)A) at position 37 in tRNAs that read codons beginning with uridine. The sequence is that of tRNA-2-methylthio-N(6)-dimethylallyladenosine synthase from Staphylococcus haemolyticus (strain JCSC1435).